Reading from the N-terminus, the 453-residue chain is Ribulose bisphosphate carboxylase large chain (453 aa).

Residues 1–2 (MS) constitute a propeptide that is removed on maturation. Position 3 is an N-acetylproline (Pro3). Lys14 is modified (N6,N6,N6-trimethyllysine). Positions 123 and 173 each coordinate substrate. Lys175 serves as the catalytic Proton acceptor. Lys177 lines the substrate pocket. Mg(2+) contacts are provided by Lys201, Asp203, and Glu204. Lys201 carries the N6-carboxylysine modification. The active-site Proton acceptor is His294. Positions 295, 327, and 379 each coordinate substrate.

Belongs to the RuBisCO large chain family. Type I subfamily. In terms of assembly, heterohexadecamer of 8 large chains and 8 small chains; disulfide-linked. The disulfide link is formed within the large subunit homodimers. Mg(2+) serves as cofactor. The disulfide bond which can form in the large chain dimeric partners within the hexadecamer appears to be associated with oxidative stress and protein turnover.

It is found in the plastid. The protein localises to the chloroplast. It carries out the reaction 2 (2R)-3-phosphoglycerate + 2 H(+) = D-ribulose 1,5-bisphosphate + CO2 + H2O. The catalysed reaction is D-ribulose 1,5-bisphosphate + O2 = 2-phosphoglycolate + (2R)-3-phosphoglycerate + 2 H(+). Its function is as follows. RuBisCO catalyzes two reactions: the carboxylation of D-ribulose 1,5-bisphosphate, the primary event in carbon dioxide fixation, as well as the oxidative fragmentation of the pentose substrate in the photorespiration process. Both reactions occur simultaneously and in competition at the same active site. The chain is Ribulose bisphosphate carboxylase large chain from Galium lucidum.